The sequence spans 323 residues: Cyclin-dependent kinase 1 (323 aa).

The region spanning 4–306 is the Protein kinase domain; sequence YQKIEKIGEG…AKQACMHPYF (303 aa). Residues 10 to 18 and K34 each bind ATP; that span reads IGEGTYGVV. T14 is subject to Phosphothreonine. At Y15 the chain carries Phosphotyrosine. D147 (proton acceptor) is an active-site residue. A Phosphothreonine; by CAK modification is found at T180.

Belongs to the protein kinase superfamily. CMGC Ser/Thr protein kinase family. CDC2/CDKX subfamily. In terms of assembly, forms a stable but non-covalent complex with a regulatory subunit (SUC1) and with a cyclin.

It carries out the reaction L-seryl-[protein] + ATP = O-phospho-L-seryl-[protein] + ADP + H(+). It catalyses the reaction L-threonyl-[protein] + ATP = O-phospho-L-threonyl-[protein] + ADP + H(+). Phosphorylation at Thr-14 or Tyr-15 inactivates the enzyme, while phosphorylation at Thr-180 activates it. In terms of biological role, cyclin-dependent kinase that acts as a master regulator of the mitotic and meiotic cell cycles. The sequence is that of Cyclin-dependent kinase 1 from Emericella nidulans (strain FGSC A4 / ATCC 38163 / CBS 112.46 / NRRL 194 / M139) (Aspergillus nidulans).